Here is a 234-residue protein sequence, read N- to C-terminus: Leucyl/phenylalanyl-tRNA--protein transferase (234 aa).

Belongs to the L/F-transferase family.

The protein localises to the cytoplasm. The enzyme catalyses N-terminal L-lysyl-[protein] + L-leucyl-tRNA(Leu) = N-terminal L-leucyl-L-lysyl-[protein] + tRNA(Leu) + H(+). It carries out the reaction N-terminal L-arginyl-[protein] + L-leucyl-tRNA(Leu) = N-terminal L-leucyl-L-arginyl-[protein] + tRNA(Leu) + H(+). The catalysed reaction is L-phenylalanyl-tRNA(Phe) + an N-terminal L-alpha-aminoacyl-[protein] = an N-terminal L-phenylalanyl-L-alpha-aminoacyl-[protein] + tRNA(Phe). In terms of biological role, functions in the N-end rule pathway of protein degradation where it conjugates Leu, Phe and, less efficiently, Met from aminoacyl-tRNAs to the N-termini of proteins containing an N-terminal arginine or lysine. In Myxococcus xanthus (strain DK1622), this protein is Leucyl/phenylalanyl-tRNA--protein transferase.